A 656-amino-acid polypeptide reads, in one-letter code: Squalene-hopene cyclase (656 aa).

The stretch at Glu68–Gly110 is one PFTB 1 repeat. Asp396 acts as the Proton donor in catalysis. PFTB repeat units lie at residues Leu417–Asp459, Ile485–Gly525, Val533–Ala582, and Val591–Pro634.

It belongs to the terpene cyclase/mutase family.

The enzyme catalyses squalene = hop-22(29)-ene. It carries out the reaction squalene + H2O = hopan-22-ol. Functionally, squalene cyclase that catalyzes the oxygen-independent cyclization of squalene into hopanoids, a class of cyclic triterpenoids including hop-22(29)-ene, hop-17(21)-ene, hop-21(22)-ene, and hopan-22-ol. The protein is Squalene-hopene cyclase of Schizosaccharomyces japonicus (strain yFS275 / FY16936) (Fission yeast).